The primary structure comprises 345 residues: MEDERGRERGGDAAQQKTPRPECEESRPLSVEKKQRCRLDGKETDGSKFISSNGSDFSDPVYKEIAMTNGCINRMSKEELRAKLSEFKLETRGVKDVLKKRLKNYYKKQKLMLKESSAGDSYYDYICIIDFEATCEEGNPAEFLHEIIEFPVVLLNTHTLEIEDTFQQYVRPEVNAQLSEFCIGLTGITQDQVDRADAFPQVLKKVIEWMKSKELGTKYKYCILTDGSWDMSKFLSIQCRLSRLKHPAFAKKWINIRKSYGNFYKVPRSQTKLTIMLEKLGMDYDGRPHSGLDDSKNIARIAVRMLQDGCELRINEKILGGQLMSVSSSLPVEGAPAPQMPHSRK.

Composition is skewed to basic and acidic residues over residues 1-11 (MEDERGRERGG) and 19-46 (PRPECEESRPLSVEKKQRCRLDGKETDG). The interval 1–50 (MEDERGRERGGDAAQQKTPRPECEESRPLSVEKKQRCRLDGKETDGSKFI) is disordered. A phosphoserine mark is found at Ser55 and Ser58. One can recognise an SAP domain in the interval 72–106 (INRMSKEELRAKLSEFKLETRGVKDVLKKRLKNYY). In terms of domain architecture, Exonuclease spans 126-302 (ICIIDFEATC…DDSKNIARIA (177 aa)). Positions 130 and 132 each coordinate Mg(2+). The active-site Proton acceptor is the Glu132. AMP contacts are provided by Glu132 and Ala133. Residue Asp230 coordinates Mg(2+). His289 functions as the Proton acceptor in the catalytic mechanism. His289 contacts AMP. Asp294 is a binding site for Mg(2+).

Identified in a histone pre-mRNA complex, at least composed of ERI1, LSM11, SLBP, SNRPB, SYNCRIP and YBX1. Binds to 40S and 60S ribosomal subunits and to 80S assembled ribosomes. Interacts in a cooperative manner with SLBP to the mature 3'-end of histone mRNAs. Found in a ternary complex with SLBP and the stem-loop structure of the 3'-end of histone mRNAs. Mg(2+) is required as a cofactor. As to expression, widely expressed with high levels in spleen, thymus and testis (at protein level).

It localises to the cytoplasm. Its subcellular location is the nucleus. It is found in the nucleolus. It catalyses the reaction Exonucleolytic cleavage in the 3'- to 5'-direction to yield nucleoside 5'-phosphates.. With respect to regulation, although it can bind simultaneously with SLBP to the 3'-end of histone mRNA, the presence of SLBP prevents the exonuclease activity. In terms of biological role, RNA exonuclease that binds to the 3'-end of histone mRNAs and degrades them, suggesting that it plays an essential role in histone mRNA decay after replication. A 2' and 3'-hydroxyl groups at the last nucleotide of the histone 3'-end is required for efficient 3'-end histone mRNA exonuclease activity and degradation of RNA substrates. Also able to degrade the 3'-overhangs of short interfering RNAs (siRNAs) in vitro, suggesting a possible role as regulator of RNA interference (RNAi). Required for binding the 5'-ACCCA-3' sequence present in stem-loop structure. Able to bind other mRNAs. Required for 5.8S rRNA 3'-end processing. Also binds to 5.8s ribosomal RNA. Binds with high affinity to the stem-loop structure of replication-dependent histone pre-mRNAs. In vitro, does not have sequence specificity. In vitro, has weak DNA exonuclease activity. In vitro, shows biphasic kinetics such that there is rapid hydrolysis of the last three unpaired RNA nucleotides in the 39 flanking sequence followed by a much slower cleavage through the stem that occurs over a longer incubation period in the order of hours. ERI1-mediated RNA metabolism plays a key role in chondrogenesis. The polypeptide is 3'-5' exoribonuclease 1 (Eri1) (Mus musculus (Mouse)).